The sequence spans 159 residues: MKKLAIMAAASMIFTVGSAQATFQASGTTGITTLTVTEECRVQVGNVTATLARSKLKDDTAIGVIGVTALGCNGLQAALQADPDNYDATNLYMTSRNHDKLNVKLKATDGSSWTYGNGVFYKTEGGNWGGHVGISVDGNQTDKPTGEYTLNLTGGYWTN.

An N-terminal signal peptide occupies residues 1–21; the sequence is MKKLAIMAAASMIFTVGSAQA.

This sequence belongs to the Dr-adhesin family.

It is found in the fimbrium. Its function is as follows. Hemagglutinins of uropathogenic E.coli mediate adherence to the upper urinary tract. These adhesins bind to the Dr blood group antigen and also agglutinate human erythrocytes in the presence of D-mannose (mannose-resistant hemagglutination (MRHA)). C1845 is a strain responsible for diarrheal disease. The chain is F1845 fimbrial protein (daaE) from Escherichia coli.